An 82-amino-acid polypeptide reads, in one-letter code: Defensin-like protein 7 (82 aa).

A signal peptide spans 1–29 (MKSSTTSMQLIPTLFFLTILLASPEMVEG). Pyrrolidone carboxylic acid is present on glutamine 30. Intrachain disulfides connect cysteine 33–cysteine 77, cysteine 44–cysteine 64, cysteine 50–cysteine 71, and cysteine 54–cysteine 73.

It belongs to the DEFL family. In terms of tissue distribution, expressed in stems, roots, rosette leaves and flower buds.

The protein localises to the secreted. This Arabidopsis thaliana (Mouse-ear cress) protein is Defensin-like protein 7 (LCR75).